A 377-amino-acid chain; its full sequence is Adaptive-response sensory kinase SasA (377 aa).

Residues methionine 154–arginine 373 enclose the Histidine kinase domain. A Phosphohistidine; by autocatalysis modification is found at histidine 157.

In terms of assembly, homooligomerizes. Interacts with KaiC. Participates in the KaiABC clock complex, whose core is composed of a KaiC homohexamer, 6 KaiB and up to 6 KaiA dimers. SasA and KaiB(fs) compete to bind to KaiC.

It carries out the reaction ATP + protein L-histidine = ADP + protein N-phospho-L-histidine.. Functionally, member of the two-component regulatory system SasA/RpaA involved in genome-wide circadian gene expression. One of several clock output pathways. Participates in the Kai clock protein complex, the main circadian regulator in cyanobacteria, via its interaction with KaiC. KaiC enhances the autophosphorylation activity of SasA, which then transfers its phosphate group to RpaA to activate it. In addition to its output function, recruits fold-shifted KaiB (KaiB(fs)) to KaiC to cooperatively form the KaiB(6):KaiC(6) complex (independent of SasA kinase activity). Required for robustness of the circadian rhythm of gene expression and is involved in clock output, also required for adaptation to light/dark cycles. This is Adaptive-response sensory kinase SasA from Synechococcus sp. (strain JA-2-3B'a(2-13)) (Cyanobacteria bacterium Yellowstone B-Prime).